Reading from the N-terminus, the 202-residue chain is MSRYRGARLRVTRRLGDLPGLTRKAAKRSYPPGQHGQARRKRSEYAIRLEEKQKLRFNYGVSERQLVRYVKKARAQGGSTGTNLLKLLENRLDNVCFRLGFGPTIPGSRQLVNHGHVTVNGRVVDIASYQCKAGDVIAIREKKPSKKLAETNLEFPGLANIPPHLELEKSKLTAKVVGKCEREWVALEINELLVVEYYSRKV.

The tract at residues 18–42 (LPGLTRKAAKRSYPPGQHGQARRKR) is disordered. The region spanning 90-152 (NRLDNVCFRL…KPSKKLAETN (63 aa)) is the S4 RNA-binding domain.

The protein belongs to the universal ribosomal protein uS4 family. As to quaternary structure, part of the 30S ribosomal subunit. Contacts protein S5. The interaction surface between S4 and S5 is involved in control of translational fidelity.

One of the primary rRNA binding proteins, it binds directly to 16S rRNA where it nucleates assembly of the body of the 30S subunit. In terms of biological role, with S5 and S12 plays an important role in translational accuracy. The protein is Small ribosomal subunit protein uS4 of Synechococcus sp. (strain RCC307).